Consider the following 147-residue polypeptide: Large ribosomal subunit protein uL13 (147 aa).

Belongs to the universal ribosomal protein uL13 family. In terms of assembly, part of the 50S ribosomal subunit.

This protein is one of the early assembly proteins of the 50S ribosomal subunit, although it is not seen to bind rRNA by itself. It is important during the early stages of 50S assembly. The chain is Large ribosomal subunit protein uL13 from Lactiplantibacillus plantarum (strain ATCC BAA-793 / NCIMB 8826 / WCFS1) (Lactobacillus plantarum).